Here is an 83-residue protein sequence, read N- to C-terminus: Protein Vpu (83 aa).

The Extracellular portion of the chain corresponds to 1 to 4 (MLSL). Residues 5–25 (GFIALGAAVSIAVIVWALLYR) form a helical membrane-spanning segment. At 26-83 (EYKKIKLQEKIKHIRQRIREREEDSGNESDGDAEWLDGDEEWLVTLLSSSKLDQGNWV) the chain is on the cytoplasmic side. Phosphoserine; by host CK2 occurs at positions 50 and 54.

This sequence belongs to the HIV-1 VPU protein family. As to quaternary structure, homopentamer. Interacts with host CD4 and BRTC; these interactions induce proteasomal degradation of CD4. Interacts with host BST2; this interaction leads to the degradation of host BST2. Interacts with host FBXW11. Interacts with host AP1M1; this interaction plays a role in the mistrafficking and subsequent degradation of host BST2. Interacts with host RANBP2; this interaction allows Vpu to down-regulate host BLM sumoylation. Post-translationally, phosphorylated by host CK2. This phosphorylation is necessary for interaction with human BTRC and degradation of CD4.

The protein resides in the host membrane. With respect to regulation, ion channel activity is inhibited by hexamethylene amiloride in vitro. Functionally, enhances virion budding by targeting host CD4 and Tetherin/BST2 to proteasome degradation. Degradation of CD4 prevents any unwanted premature interactions between viral Env and its host receptor CD4 in the endoplasmic reticulum. Degradation of antiretroviral protein Tetherin/BST2 is important for virion budding, as BST2 tethers new viral particles to the host cell membrane. Mechanistically, Vpu bridges either CD4 or BST2 to BTRC, a substrate recognition subunit of the Skp1/Cullin/F-box protein E3 ubiquitin ligase, induces their ubiquitination and subsequent proteasomal degradation. The alteration of the E3 ligase specificity by Vpu seems to promote the degradation of host IKBKB, leading to NF-kappa-B down-regulation and subsequent apoptosis. Acts as a viroporin that forms an oligomeric ion channel in membranes. Modulates the host DNA repair mechanisms to promote degradation of nuclear viral cDNA in cells that are already productively infected in order to suppress immune sensing and proviral hyper-integration (superinfection). Manipulates PML-NBs and modulates SUMOylation of host BLM protein thereby enhancing its DNA-end processing activity toward viral unintegrated linear DNA. Also inhibits RAD52-mediated homologous repair of viral cDNA, preventing the generation of dead-end circular forms of single copies of the long terminal repeat and permitting sustained nucleolytic attack. This is Protein Vpu from Human immunodeficiency virus type 1 group N (isolate YBF30) (HIV-1).